We begin with the raw amino-acid sequence, 626 residues long: Protein MICRORCHIDIA 2 (626 aa).

Residues M579–A626 adopt a coiled-coil conformation.

It belongs to the MORC ATPase protein family. Homodimer and heterodimer with MORC6. Component of an RNA-directed DNA methylation (RdDM) complex that contains at least MORC6, MORC1/CRT1, MORC2, SWI3D and SUVH9. Binds directly to SUVH9. It depends on Mg(2+) as a cofactor. Mn(2+) serves as cofactor.

The protein localises to the nucleus. It is found in the endosome. Functionally, mediator of defense signaling triggered by distinct classes of R proteins. Required during hypersensitive response (HR) that confers disease resistance to turnip crinkle virus (TCV). Contributes to resistance against Pseudomonas syringae and Hyaloperonospora arabidopsidis, at early stages prior to cytosolic calcium ions Ca(2+) accumulation. Required for pathogen-associated molecular pattern (PAMP)-triggered immunity, basal resistance, non-host resistance and systemic acquired resistance (SAR). Involved in RNA-directed DNA methylation (RdDM) as a component of the RdDM machinery and required for gene silencing. May also be involved in the regulation of chromatin architecture to maintain gene silencing. Exhibits ATPase activity. This is Protein MICRORCHIDIA 2 from Arabidopsis thaliana (Mouse-ear cress).